The sequence spans 275 residues: Lincomycin biosynthesis protein LmbN (275 aa).

One can recognise a Carrier domain in the interval 1-78; sequence MSTLDEVLAL…AIAATVARIT (78 aa). At Ser-37 the chain carries O-(pantetheine 4'-phosphoryl)serine. Residues 113–275 enclose the SIS domain; it reads LFDTWHAGGT…HHALCVAHAP (163 aa).

The protein operates within antibiotic biosynthesis; lincomycin biosynthesis. The polypeptide is Lincomycin biosynthesis protein LmbN (lmbN) (Streptomyces lincolnensis).